The chain runs to 163 residues: Nucleotide-binding protein Dde_2479 (163 aa).

It belongs to the YajQ family.

In terms of biological role, nucleotide-binding protein. This is Nucleotide-binding protein Dde_2479 from Oleidesulfovibrio alaskensis (strain ATCC BAA-1058 / DSM 17464 / G20) (Desulfovibrio alaskensis).